The following is a 144-amino-acid chain: MSELFSNDNIFLNVNVNSQNEAIEKAGKALVDSGAVTDAYIQAMKDREQVVSTFMGNGLAIPHGTDEAKTNVIHSGLTLLQIPEGVDWDGEVVKVVVGIAGKDGEHLDLLSKIAITFSEEGNVDRIVQAKSAEEIKQVFEEADA.

In terms of domain architecture, PTS EIIA type-2 spans 3-142 (ELFSNDNIFL…EEIKQVFEEA (140 aa)). H63 serves as the catalytic Tele-phosphohistidine intermediate. H63 is modified (phosphohistidine; by HPr).

In terms of assembly, homodimer or homotrimer. Seems to be a monomer when not phosphorylated.

It is found in the cytoplasm. In terms of biological role, the phosphoenolpyruvate-dependent sugar phosphotransferase system (sugar PTS), a major carbohydrate active transport system, catalyzes the phosphorylation of incoming sugar substrates concomitantly with their translocation across the cell membrane. The enzyme II CmtAB PTS system is involved in D-mannitol transport. This Staphylococcus aureus (strain MRSA252) protein is Mannitol-specific phosphotransferase enzyme IIA component (mtlF).